Consider the following 272-residue polypeptide: MTVFAAEQQFHDAERPLPSHQARLACRAGLAETTAGVAPGFVQGNLAILPEKYAAAFHRFCQLNPKPCPIVGMSDVGNPMIPSLGIDLDIRTDLPRYRVWRDGELVEEPTDIVAHWRDDLVAFVIGCSFSFEEALLADDIPIRHIEEKVRVPMYRTNIPCEPAGPFSGPMVVSMRPLKPKDAIRAIQVTSRFPSVHGAPVHIGLPQSIGIADIAKPDYGDPVPIGPDELPVFWACGVTPQAVIAAAKVPFAITHAPGLMLVTDLKNKHLAVL.

It belongs to the D-glutamate cyclase family.

This is Putative hydro-lyase Rpal_1947 from Rhodopseudomonas palustris (strain TIE-1).